Consider the following 275-residue polypeptide: MPSATGTKRVRGVSIFRPFVFGSEAQPFDPATKPSNVSSDHTHQWRVYVRGVNGEDISYWIKKVQFKLHETYVQNVRTVEHPPYEVTETGWGEFEIQIKIYFVPESMEKPQTLWHSLKLHPYGPDAEGKKERREVVVSQNYEEVVFNEPVEQFYDYLTGGSGTQQMQKGKSGKNAKQAQQQRGGRTAEIPFNETPENPYSRTAENKELDRLAEANKTVEQMIKDEKERLIAREKRLAELRASEGVPAQPLKKSFSGRIPVHSQQRMAGTVGPPDS.

The region spanning 9-160 (RVRGVSIFRP…EQFYDYLTGG (152 aa)) is the YEATS domain. 2 disordered regions span residues 161–207 (SGTQ…ENKE) and 239–275 (LRAS…PPDS). Residues 163–183 (TQQMQKGKSGKNAKQAQQQRG) show a composition bias toward polar residues. Positions 202–242 (TAENKELDRLAEANKTVEQMIKDEKERLIAREKRLAELRAS) form a coiled coil.

Belongs to the YAF9 family. As to quaternary structure, component of the SWR1 chromatin-remodeling complex and of the NuA4 histone acetyltransferase complex.

The protein resides in the cytoplasm. Its subcellular location is the nucleus. Functionally, component of the SWR1 complex which mediates the ATP-dependent exchange of histone H2A for the H2A variant HZT1 leading to transcriptional regulation of selected genes by chromatin remodeling. Component of the NuA4 histone acetyltransferase complex which is involved in transcriptional activation of selected genes principally by acetylation of nucleosomal histones H4 and H2A. The NuA4 complex is also involved in DNA repair. Yaf9 may also be required for viability in conditions in which the structural integrity of the spindle is compromised. The polypeptide is Protein AF-9 homolog (yaf9) (Emericella nidulans (strain FGSC A4 / ATCC 38163 / CBS 112.46 / NRRL 194 / M139) (Aspergillus nidulans)).